Consider the following 409-residue polypeptide: F-box protein At3g17320 (409 aa).

Residues 1 to 47 form the F-box domain; the sequence is MTKISDLPRDLAEEVLSRVPVTYLRAIRFTCKKWNTLTKRRSFTKKL.

The sequence is that of F-box protein At3g17320 from Arabidopsis thaliana (Mouse-ear cress).